Here is a 457-residue protein sequence, read N- to C-terminus: Argininosuccinate lyase (457 aa).

It belongs to the lyase 1 family. Argininosuccinate lyase subfamily.

The protein resides in the cytoplasm. It catalyses the reaction 2-(N(omega)-L-arginino)succinate = fumarate + L-arginine. It participates in amino-acid biosynthesis; L-arginine biosynthesis; L-arginine from L-ornithine and carbamoyl phosphate: step 3/3. The sequence is that of Argininosuccinate lyase from Shigella boydii serotype 18 (strain CDC 3083-94 / BS512).